Consider the following 71-residue polypeptide: Non-structural protein 3x (71 aa).

This chain is Non-structural protein 3x, found in Feline coronavirus (strain FIPV WSU-79/1146) (FCoV).